We begin with the raw amino-acid sequence, 559 residues long: 2,3-bisphosphoglycerate-independent phosphoglycerate mutase (559 aa).

Mn(2+) is bound by residues D28 and S81. S81 (phosphoserine intermediate) is an active-site residue. Substrate contacts are provided by residues H140, 170–171 (RD), R206, R213, 286–289 (RADR), and K361. Residues D430, H434, D471, H472, and H501 each contribute to the Mn(2+) site.

Belongs to the BPG-independent phosphoglycerate mutase family. Monomer. Requires Mn(2+) as cofactor.

Its subcellular location is the cytoplasm. It carries out the reaction (2R)-2-phosphoglycerate = (2R)-3-phosphoglycerate. It functions in the pathway carbohydrate degradation; glycolysis; pyruvate from D-glyceraldehyde 3-phosphate: step 3/5. Functionally, catalyzes the interconversion of 2-phosphoglycerate and 3-phosphoglycerate. The chain is 2,3-bisphosphoglycerate-independent phosphoglycerate mutase (PGM1) from Mesembryanthemum crystallinum (Common ice plant).